Reading from the N-terminus, the 252-residue chain is ATP synthase subunit a (252 aa).

5 helical membrane passes run 33-53 (GQVFITTWIVMGILIVAALAA), 92-112 (VPFVGTLFLFIFVCNWSGALV), 130-150 (DINTTVALALLVSLAYFYAGL), 196-216 (LVVGVLVLLVPLFVPLPVMAL), and 217-237 (GLFTSAIQALVFATLAATYIG).

Belongs to the ATPase A chain family. As to quaternary structure, F-type ATPases have 2 components, CF(1) - the catalytic core - and CF(0) - the membrane proton channel. CF(1) has five subunits: alpha(3), beta(3), gamma(1), delta(1), epsilon(1). CF(0) has three main subunits: a(1), b(2) and c(9-12). The alpha and beta chains form an alternating ring which encloses part of the gamma chain. CF(1) is attached to CF(0) by a central stalk formed by the gamma and epsilon chains, while a peripheral stalk is formed by the delta and b chains.

It localises to the cellular thylakoid membrane. Key component of the proton channel; it plays a direct role in the translocation of protons across the membrane. The chain is ATP synthase subunit a from Synechococcus sp. (strain PCC 6716).